The following is a 621-amino-acid chain: UvrABC system protein C (621 aa).

The 80-residue stretch at 21 to 100 (AEPGVYLMRD…IKTYQPPYNV (80 aa)) folds into the GIY-YIG domain. A UVR domain is found at 210-245 (DELIRELKEKMAQAAQQENYEAAARYRDQIRGLEQL).

This sequence belongs to the UvrC family. In terms of assembly, interacts with UvrB in an incision complex.

It localises to the cytoplasm. In terms of biological role, the UvrABC repair system catalyzes the recognition and processing of DNA lesions. UvrC both incises the 5' and 3' sides of the lesion. The N-terminal half is responsible for the 3' incision and the C-terminal half is responsible for the 5' incision. This chain is UvrABC system protein C, found in Synechococcus sp. (strain JA-3-3Ab) (Cyanobacteria bacterium Yellowstone A-Prime).